A 533-amino-acid chain; its full sequence is Putative adhesin P1-like protein MPN_409 (533 aa).

Disordered regions lie at residues 15-45 and 92-166; these read KNHR…GSRS and SGWR…SITP. Residues 28–45 are compositionally biased toward low complexity; sequence TGAGSSSGTSTNTSGSRS. Residues 95-107 are compositionally biased toward basic and acidic residues; sequence RNDKNGQSDENHT.

The protein belongs to the adhesin P1 family.

This Mycoplasma pneumoniae (strain ATCC 29342 / M129 / Subtype 1) (Mycoplasmoides pneumoniae) protein is Putative adhesin P1-like protein MPN_409.